We begin with the raw amino-acid sequence, 1186 residues long: Atrophin-1 (1186 aa).

3 disordered regions span residues 1–604 (MKTR…PTVT), 618–763 (ASSP…ARFN), and 781–858 (VPLE…HRPP). Positions 16–32 (RKKEAPGPREELRSRGR) match the Nuclear localization signal motif. Basic and acidic residues predominate over residues 17 to 29 (KKEAPGPREELRS). Ser34 bears the Phosphoserine mark. Basic and acidic residues predominate over residues 45-63 (GKAEKSRQTAKKARVEEAS). 5 positions are modified to phosphoserine: Ser77, Ser79, Ser100, Ser102, and Ser106. Residues 107-127 (LDGRSLNDDGSSDPRDIDQDN) show a composition bias toward basic and acidic residues. The span at 128 to 151 (RSTSPSIYSPGSVENDSDSSSGLS) shows a compositional bias: polar residues. Over residues 157 to 173 (PYHPPPLFPPSPQPPDS) the composition is skewed to pro residues. Low complexity-rich tracts occupy residues 258–270 (PISVSSSGASGAP), 349–365 (PTLAPSPHSLPPASSSA), and 375–396 (SSSSSSSAAASSSSSSSSSSAS). The span at 416–437 (SLSVSNQPPKYTQPSLPSQAVW) shows a compositional bias: polar residues. The segment covering 484-503 (QQQQQQQQQQQQQQQHHGNS) has biased composition (low complexity). The segment at 513 to 563 (HPLEGGSSHHAHPYAMSPSLGSLRPYPPGPAHLPPPHSQVSYSQAGPNGPP) is involved in binding BAIAP2. Residues 537 to 549 (PYPPGPAHLPPPH) show a composition bias toward pro residues. Composition is skewed to low complexity over residues 565 to 582 (SSSSNSSSSTSQGSYPCS) and 618 to 628 (ASSPAGYKTAS). Ser628 carries the post-translational modification Phosphoserine. Lys637 bears the N6-acetyllysine mark. Thr649 carries the phosphothreonine modification. Ser657 bears the Phosphoserine mark. At Thr665 the chain carries Phosphothreonine. Composition is skewed to pro residues over residues 689–714 (GPGPLPPAGPSGLPSLPPPPAAPASG) and 735–748 (SPVPPARSPSPPPK). Ser735 carries the post-translational modification Phosphoserine; by MAPK8. Phosphoserine occurs at positions 742 and 744. The span at 791-835 (KRADLVEKVRREAEQRAREEKEREREREREKEREREKERELERSV) shows a compositional bias: basic and acidic residues. Positions 875–890 (DTPALRTLSEYARPHV) are required for interaction with FAT1. Ser892 bears the Phosphoserine mark. The Nuclear export signal signature appears at 1029 to 1037 (ALGNDPLAR). The residue at position 1111 (Arg1111) is an Asymmetric dimethylarginine. Lys1179 is covalently cross-linked (Glycyl lysine isopeptide (Lys-Gly) (interchain with G-Cter in SUMO2)).

As to quaternary structure, interacts with NR2E1; the interaction represses the transcriptional activity of NR2E1. Interacts with BAIAP2, WWP1, WWP2, WWP3 and RERE. Interacts (via its N-terminus) with MTG8; the interaction enhances transcriptional repression of MTG8. Interacts with FAT1 (via a C-terminal domain). Interacts with PQBP1. Post-translationally, phosphorylated in vitro by MAPK8/JNK1 on Ser-735.

The protein resides in the nucleus. It is found in the cytoplasm. Its subcellular location is the perinuclear region. It localises to the cell junction. Its function is as follows. Transcriptional corepressor. Corepressor of MTG8 transcriptional repression. Recruits NR2E1 to repress transcription. Has some intrinsic repression activity. Promotes vascular smooth cell (VSMC) migration and orientation. The sequence is that of Atrophin-1 (ATN1) from Pan troglodytes (Chimpanzee).